Consider the following 72-residue polypeptide: Exodeoxyribonuclease 7 small subunit (72 aa).

Belongs to the XseB family. In terms of assembly, heterooligomer composed of large and small subunits.

Its subcellular location is the cytoplasm. It carries out the reaction Exonucleolytic cleavage in either 5'- to 3'- or 3'- to 5'-direction to yield nucleoside 5'-phosphates.. Bidirectionally degrades single-stranded DNA into large acid-insoluble oligonucleotides, which are then degraded further into small acid-soluble oligonucleotides. The polypeptide is Exodeoxyribonuclease 7 small subunit (Ruegeria pomeroyi (strain ATCC 700808 / DSM 15171 / DSS-3) (Silicibacter pomeroyi)).